Reading from the N-terminus, the 194-residue chain is Large ribosomal subunit protein bL9 (194 aa).

A compositionally biased stretch (basic and acidic residues) spans arginine 156 to glutamine 167. The interval arginine 156 to glutamine 194 is disordered. Acidic residues predominate over residues phenylalanine 181 to glutamine 194.

The protein belongs to the bacterial ribosomal protein bL9 family.

In terms of biological role, binds to the 23S rRNA. This chain is Large ribosomal subunit protein bL9, found in Rhodopseudomonas palustris (strain BisB5).